The sequence spans 239 residues: Probable transcriptional regulatory protein lmo0369 (239 aa).

It belongs to the TACO1 family. YeeN subfamily.

The protein localises to the cytoplasm. The chain is Probable transcriptional regulatory protein lmo0369 from Listeria monocytogenes serovar 1/2a (strain ATCC BAA-679 / EGD-e).